The chain runs to 43 residues: Protein PsbN (43 aa).

Residues 7–27 (ITIFLSCFLVGVTGYALYTAF) form a helical membrane-spanning segment.

The protein belongs to the PsbN family.

The protein resides in the plastid. The protein localises to the chloroplast thylakoid membrane. In terms of biological role, may play a role in photosystem I and II biogenesis. This is Protein PsbN from Klebsormidium bilatum (Filamentous green alga).